We begin with the raw amino-acid sequence, 1096 residues long: Adenylate-forming reductase Nps9 (1096 aa).

The adenylation (A) domain stretch occupies residues 39–352 (DDTLTEISFL…TTEFGAPTQL (314 aa)). AMP-binding positions include H236, 339–340 (VQ), T344, and 425–428 (IIGR). Residues 569–656 (EWTVSTLEHW…LLADRVAKIA (88 aa)) form the Carrier domain. At S605 the chain carries O-(pantetheine 4'-phosphoryl)serine. The reductase (R) domain stretch occupies residues 716–952 (LTGSTGGLGS…MPAEKVSAAI (237 aa)). NADP(+)-binding positions include 720 to 723 (TGGL), 807 to 809 (SAW), Y880, and K884.

The protein belongs to the adenylate-forming reductase family.

Adenylate-forming reductase, a natural product biosynthesis enzyme that resembles non-ribosomal peptide synthetases, yet serves to modify one substrate, rather than to condense two or more building blocks. The A-domain preferentially accepts L-threonine as substrate. The natural product of the enzyme is not yet known. This Serpula lacrymans var. lacrymans (strain S7.9) (Dry rot fungus) protein is Adenylate-forming reductase Nps9.